The sequence spans 345 residues: Very-long-chain 3-oxoacyl-CoA reductase (345 aa).

The helical transmembrane segment at 26–46 threads the bilayer; sequence GAAVLLATGGLFLASRVLTFV. Val-71, Asp-125, Asp-133, Asn-152, Tyr-219, Lys-223, Ile-252, and Ser-254 together coordinate NADP(+). Tyr-219 serves as the catalytic Proton donor. Residue Lys-223 is the Lowers pKa of active site Tyr of the active site.

This sequence belongs to the short-chain dehydrogenases/reductases (SDR) family.

The protein resides in the endoplasmic reticulum membrane. The catalysed reaction is a very-long-chain (3R)-3-hydroxyacyl-CoA + NADP(+) = a very-long-chain 3-oxoacyl-CoA + NADPH + H(+). Its pathway is lipid metabolism; fatty acid biosynthesis. Its function is as follows. Component of the microsomal membrane bound fatty acid elongation system, which produces the 26-carbon very long-chain fatty acids (VLCFA) from palmitate. Catalyzes the reduction of the 3-ketoacyl-CoA intermediate that is formed in each cycle of fatty acid elongation. VLCFAs serve as precursors for ceramide and sphingolipids. The sequence is that of Very-long-chain 3-oxoacyl-CoA reductase from Aspergillus clavatus (strain ATCC 1007 / CBS 513.65 / DSM 816 / NCTC 3887 / NRRL 1 / QM 1276 / 107).